The chain runs to 296 residues: Homoserine kinase (296 aa).

85-95 is a binding site for ATP; the sequence is PLSRGLGSSAA.

Belongs to the GHMP kinase family. Homoserine kinase subfamily.

The protein resides in the cytoplasm. The catalysed reaction is L-homoserine + ATP = O-phospho-L-homoserine + ADP + H(+). The protein operates within amino-acid biosynthesis; L-threonine biosynthesis; L-threonine from L-aspartate: step 4/5. In terms of biological role, catalyzes the ATP-dependent phosphorylation of L-homoserine to L-homoserine phosphate. The sequence is that of Homoserine kinase from Clostridium acetobutylicum (strain ATCC 824 / DSM 792 / JCM 1419 / IAM 19013 / LMG 5710 / NBRC 13948 / NRRL B-527 / VKM B-1787 / 2291 / W).